The primary structure comprises 173 residues: Translation initiation factor IF-3 (173 aa).

The protein belongs to the IF-3 family. As to quaternary structure, monomer.

It is found in the cytoplasm. IF-3 binds to the 30S ribosomal subunit and shifts the equilibrium between 70S ribosomes and their 50S and 30S subunits in favor of the free subunits, thus enhancing the availability of 30S subunits on which protein synthesis initiation begins. The protein is Translation initiation factor IF-3 of Enterococcus faecalis (strain ATCC 700802 / V583).